The following is a 422-amino-acid chain: 26S proteasome non-ATPase regulatory subunit 11 (422 aa).

Ala2 is subject to N-acetylalanine. Ser14 and Ser23 each carry phosphoserine. A PCI domain is found at 224 to 392; that stretch reads DWKTAYSYFY…GVLIIFDEPP (169 aa). Lys274 participates in a covalent cross-link: Glycyl lysine isopeptide (Lys-Gly) (interchain with G-Cter in SUMO2).

It belongs to the proteasome subunit S9 family. Component of the 19S proteasome regulatory particle complex. The 26S proteasome consists of a 20S core particle (CP) and two 19S regulatory subunits (RP). The regulatory particle is made of a lid composed of 9 subunits including PSMD11, a base containing 6 ATPases and few additional components. In terms of processing, phosphorylated by AMPK.

It is found in the nucleus. Its subcellular location is the cytoplasm. The protein resides in the cytosol. Its function is as follows. Component of the 26S proteasome, a multiprotein complex involved in the ATP-dependent degradation of ubiquitinated proteins. This complex plays a key role in the maintenance of protein homeostasis by removing misfolded or damaged proteins, which could impair cellular functions, and by removing proteins whose functions are no longer required. Therefore, the proteasome participates in numerous cellular processes, including cell cycle progression, apoptosis, or DNA damage repair. In the complex, PSMD11 is required for proteasome assembly. Plays a key role in increased proteasome activity in embryonic stem cells (ESCs): its high expression in ESCs promotes enhanced assembly of the 26S proteasome, followed by higher proteasome activity. The polypeptide is 26S proteasome non-ATPase regulatory subunit 11 (PSMD11) (Bos taurus (Bovine)).